We begin with the raw amino-acid sequence, 137 residues long: Fluoride-specific ion channel FluC 1 (137 aa).

4 helical membrane-spanning segments follow: residues 4-24, 37-57, 62-82, and 100-120; these read LIYI…YYLG, LATL…TTYI, ILPA…FTTF, and IAFL…GLGY. Na(+) contacts are provided by Gly-77 and Thr-80.

It belongs to the fluoride channel Fluc/FEX (TC 1.A.43) family.

It localises to the cell membrane. The catalysed reaction is fluoride(in) = fluoride(out). With respect to regulation, na(+) is not transported, but it plays an essential structural role and its presence is essential for fluoride channel function. Its function is as follows. Fluoride-specific ion channel. Important for reducing fluoride concentration in the cell, thus reducing its toxicity. In Bacillus cereus (strain ATCC 10987 / NRS 248), this protein is Fluoride-specific ion channel FluC 1.